Consider the following 160-residue polypeptide: Nucleotide-binding protein Patl_4311 (160 aa).

It belongs to the YajQ family.

Its function is as follows. Nucleotide-binding protein. This is Nucleotide-binding protein Patl_4311 from Pseudoalteromonas atlantica (strain T6c / ATCC BAA-1087).